The following is a 236-amino-acid chain: 1-(5-phosphoribosyl)-5-[(5-phosphoribosylamino)methylideneamino] imidazole-4-carboxamide isomerase (236 aa).

Residue D8 is the Proton acceptor of the active site. D127 serves as the catalytic Proton donor.

The protein belongs to the HisA/HisF family.

The protein resides in the cytoplasm. It catalyses the reaction 1-(5-phospho-beta-D-ribosyl)-5-[(5-phospho-beta-D-ribosylamino)methylideneamino]imidazole-4-carboxamide = 5-[(5-phospho-1-deoxy-D-ribulos-1-ylimino)methylamino]-1-(5-phospho-beta-D-ribosyl)imidazole-4-carboxamide. It functions in the pathway amino-acid biosynthesis; L-histidine biosynthesis; L-histidine from 5-phospho-alpha-D-ribose 1-diphosphate: step 4/9. The polypeptide is 1-(5-phosphoribosyl)-5-[(5-phosphoribosylamino)methylideneamino] imidazole-4-carboxamide isomerase (Campylobacter hominis (strain ATCC BAA-381 / DSM 21671 / CCUG 45161 / LMG 19568 / NCTC 13146 / CH001A)).